The sequence spans 683 residues: Cytochrome P450 monooxygenase htyF (683 aa).

A helical transmembrane segment spans residues 8–28 (PALLAASVVLAVSLVSYVIQL). N-linked (GlcNAc...) asparagine glycosylation occurs at Asn-29. Cys-481 lines the heme pocket. Asn-581 carries an N-linked (GlcNAc...) asparagine glycan. The helical transmembrane segment at 588–608 (LYVFVVLVACVAALFIGIGIY) threads the bilayer.

This sequence belongs to the cytochrome P450 family. It depends on heme as a cofactor.

It is found in the membrane. The protein operates within antifungal biosynthesis. Its function is as follows. Cytochrome P450 monooxygenase; part of the gene cluster that mediates the de novo generation of L-homotyrosine from acetyl-CoA and 4-hydroxyphenyl-pyruvate. L-homotyrosine is a building block of echinocandin B, a fungal lipidated cyclic hexapeptide that acts as an antifungal agent. L-homotyrosine 4-hydroxyphenyl-pyruvate first undergoes an aldol-type condensation by htyA with the C-2 of acetyl-CoA followed by the release of CoA to form 2-(4-hydroxybenzyl)-malate. This is followed by isomerization of 2-(4-hydroxy-benzyl)-malate to 3-(4-hydroxybenzyl)-malate by htyD. Thereafter, 3-(4-hydroxybenzyl)-malate undergoes decarboxylation and oxidation to form 2-oxo-4-(4-hydroxybenzyl)butanoic acid, coupled to reduction of NAD(+) to NADH by htyC. The product then undergoes transamination catalyzed by htyB to form L-homotyrosine. This is Cytochrome P450 monooxygenase htyF from Aspergillus rugulosus (Emericella rugulosa).